Reading from the N-terminus, the 558-residue chain is Dihydroxy-acid dehydratase (558 aa).

A Mg(2+)-binding site is contributed by Asp81. Cys122 provides a ligand contact to [2Fe-2S] cluster. Positions 123 and 124 each coordinate Mg(2+). Lys124 is subject to N6-carboxylysine. Residue Cys195 coordinates [2Fe-2S] cluster. Glu447 contributes to the Mg(2+) binding site. The active-site Proton acceptor is the Ser473.

It belongs to the IlvD/Edd family. As to quaternary structure, homodimer. Requires [2Fe-2S] cluster as cofactor. It depends on Mg(2+) as a cofactor.

It catalyses the reaction (2R)-2,3-dihydroxy-3-methylbutanoate = 3-methyl-2-oxobutanoate + H2O. The enzyme catalyses (2R,3R)-2,3-dihydroxy-3-methylpentanoate = (S)-3-methyl-2-oxopentanoate + H2O. It participates in amino-acid biosynthesis; L-isoleucine biosynthesis; L-isoleucine from 2-oxobutanoate: step 3/4. The protein operates within amino-acid biosynthesis; L-valine biosynthesis; L-valine from pyruvate: step 3/4. Its function is as follows. Functions in the biosynthesis of branched-chain amino acids. Catalyzes the dehydration of (2R,3R)-2,3-dihydroxy-3-methylpentanoate (2,3-dihydroxy-3-methylvalerate) into 2-oxo-3-methylpentanoate (2-oxo-3-methylvalerate) and of (2R)-2,3-dihydroxy-3-methylbutanoate (2,3-dihydroxyisovalerate) into 2-oxo-3-methylbutanoate (2-oxoisovalerate), the penultimate precursor to L-isoleucine and L-valine, respectively. The polypeptide is Dihydroxy-acid dehydratase (Bacillus velezensis (strain DSM 23117 / BGSC 10A6 / LMG 26770 / FZB42) (Bacillus amyloliquefaciens subsp. plantarum)).